Here is a 529-residue protein sequence, read N- to C-terminus: Peptide chain release factor 3 (529 aa).

The region spanning 11 to 280 is the tr-type G domain; sequence AKRRTFAIIS…GLVKWAPAPM (270 aa). Residues 20–27, 88–92, and 142–145 each bind GTP; these read SHPDAGKT, DTPGH, and NKLD.

This sequence belongs to the TRAFAC class translation factor GTPase superfamily. Classic translation factor GTPase family. PrfC subfamily.

The protein localises to the cytoplasm. Increases the formation of ribosomal termination complexes and stimulates activities of RF-1 and RF-2. It binds guanine nucleotides and has strong preference for UGA stop codons. It may interact directly with the ribosome. The stimulation of RF-1 and RF-2 is significantly reduced by GTP and GDP, but not by GMP. The sequence is that of Peptide chain release factor 3 from Photorhabdus laumondii subsp. laumondii (strain DSM 15139 / CIP 105565 / TT01) (Photorhabdus luminescens subsp. laumondii).